Consider the following 577-residue polypeptide: Arginine--tRNA ligase (577 aa).

Positions 122-132 match the 'HIGH' region motif; sequence PNVAKEMHVGH.

This sequence belongs to the class-I aminoacyl-tRNA synthetase family. Monomer.

It is found in the cytoplasm. It carries out the reaction tRNA(Arg) + L-arginine + ATP = L-arginyl-tRNA(Arg) + AMP + diphosphate. The chain is Arginine--tRNA ligase (argS) from Salmonella typhimurium (strain SL1344).